The primary structure comprises 1312 residues: Multidrug resistance protein 3 (1312 aa).

A helical membrane pass occupies residues 51–71 (GFIDYILLIGGIIGAMAAGVL). One can recognise an ABC transmembrane type-1 1 domain in the interval 59–369 (IGGIIGAMAA…VAMPINALST (311 aa)). Asparagine 98 carries N-linked (GlcNAc...) asparagine glycosylation. A run of 5 helical transmembrane segments spans residues 127–147 (IYFA…FFVL), 197–217 (KFGV…IGFS), 224–244 (LVIM…GFFA), 302–322 (VVGV…ALGS), and 344–364 (MVVF…AMPI). An ABC transporter 1 domain is found at 404-643 (IKLEDVQFRY…KATYYGLVKR (240 aa)). Position 439-446 (439-446 (GASGCGKS)) interacts with ATP. The 310-residue stretch at 724–1033 (LLSFLGLIGG…LGQMIPDVGK (310 aa)) folds into the ABC transmembrane type-1 2 domain. Transmembrane regions (helical) follow at residues 725 to 745 (LSFL…FYMI) and 776 to 796 (IWIL…LGLF). Asparagine 819 is a glycosylation site (N-linked (GlcNAc...) asparagine). 3 helical membrane-spanning segments follow: residues 852-872 (VGNV…AFYY), 874-894 (WKVA…VFLN), and 958-978 (AFVS…SFYI). The region spanning 1068-1307 (IEFKDICFRY…KGFYYTLAMQ (240 aa)) is the ABC transporter 2 domain. 1103-1110 (GASGCGKS) is an ATP binding site.

This sequence belongs to the ABC transporter superfamily. ABCB family. Multidrug resistance exporter (TC 3.A.1.201) subfamily.

It localises to the membrane. The catalysed reaction is ATP + H2O + xenobioticSide 1 = ADP + phosphate + xenobioticSide 2.. Energy-dependent efflux pump responsible for decreased drug accumulation in multidrug resistance parasites. This is Multidrug resistance protein 3 from Entamoeba histolytica (strain ATCC 30459 / HM-1:IMSS / ABRM).